The following is a 294-amino-acid chain: ATP synthase gamma chain (294 aa).

This sequence belongs to the ATPase gamma chain family. In terms of assembly, F-type ATPases have 2 components, CF(1) - the catalytic core - and CF(0) - the membrane proton channel. CF(1) has five subunits: alpha(3), beta(3), gamma(1), delta(1), epsilon(1). CF(0) has three main subunits: a, b and c.

Its subcellular location is the cell inner membrane. Functionally, produces ATP from ADP in the presence of a proton gradient across the membrane. The gamma chain is believed to be important in regulating ATPase activity and the flow of protons through the CF(0) complex. The chain is ATP synthase gamma chain from Campylobacter jejuni subsp. jejuni serotype O:2 (strain ATCC 700819 / NCTC 11168).